A 415-amino-acid chain; its full sequence is Gamma-glutamyl phosphate reductase (415 aa).

This sequence belongs to the gamma-glutamyl phosphate reductase family.

The protein resides in the cytoplasm. The catalysed reaction is L-glutamate 5-semialdehyde + phosphate + NADP(+) = L-glutamyl 5-phosphate + NADPH + H(+). It participates in amino-acid biosynthesis; L-proline biosynthesis; L-glutamate 5-semialdehyde from L-glutamate: step 2/2. Catalyzes the NADPH-dependent reduction of L-glutamate 5-phosphate into L-glutamate 5-semialdehyde and phosphate. The product spontaneously undergoes cyclization to form 1-pyrroline-5-carboxylate. The sequence is that of Gamma-glutamyl phosphate reductase from Desulforamulus reducens (strain ATCC BAA-1160 / DSM 100696 / MI-1) (Desulfotomaculum reducens).